The following is an 84-amino-acid chain: Exodeoxyribonuclease 7 small subunit (84 aa).

The protein belongs to the XseB family. As to quaternary structure, heterooligomer composed of large and small subunits.

It is found in the cytoplasm. It catalyses the reaction Exonucleolytic cleavage in either 5'- to 3'- or 3'- to 5'-direction to yield nucleoside 5'-phosphates.. Bidirectionally degrades single-stranded DNA into large acid-insoluble oligonucleotides, which are then degraded further into small acid-soluble oligonucleotides. This is Exodeoxyribonuclease 7 small subunit from Yersinia pseudotuberculosis serotype O:1b (strain IP 31758).